Reading from the N-terminus, the 124-residue chain is Ribonuclease pancreatic (124 aa).

Basic and acidic residues predominate over residues 1-13 (KESAAAKFERQHI). The disordered stretch occupies residues 1–23 (KESAAAKFERQHIDSSTSSVSSS). Residues K7 and R10 each coordinate substrate. Residue H12 is the Proton acceptor of the active site. Disulfide bonds link C26-C84, C40-C95, C58-C110, and C65-C72. Residue N34 is glycosylated (N-linked (GlcNAc...) asparagine). Substrate-binding positions include 41 to 45 (KPVNT), K66, and R85. The active-site Proton donor is H119.

Belongs to the pancreatic ribonuclease family. Monomer. Interacts with and forms tight 1:1 complexes with RNH1. Dimerization of two such complexes may occur. Interaction with RNH1 inhibits this protein. In terms of tissue distribution, pancreas.

It localises to the secreted. It catalyses the reaction an [RNA] containing cytidine + H2O = an [RNA]-3'-cytidine-3'-phosphate + a 5'-hydroxy-ribonucleotide-3'-[RNA].. The catalysed reaction is an [RNA] containing uridine + H2O = an [RNA]-3'-uridine-3'-phosphate + a 5'-hydroxy-ribonucleotide-3'-[RNA].. Functionally, endonuclease that catalyzes the cleavage of RNA on the 3' side of pyrimidine nucleotides. Acts on single-stranded and double-stranded RNA. This Giraffa camelopardalis (Giraffe) protein is Ribonuclease pancreatic (RNASE1).